We begin with the raw amino-acid sequence, 238 residues long: Sugar fermentation stimulation protein homolog (238 aa).

It belongs to the SfsA family.

The chain is Sugar fermentation stimulation protein homolog from Histophilus somni (strain 129Pt) (Haemophilus somnus).